A 311-amino-acid polypeptide reads, in one-letter code: NAD kinase (311 aa).

Residue aspartate 89 is the Proton acceptor of the active site. Residues 89–90 (DG), arginine 94, 163–164 (NE), aspartate 193, and 204–209 (TAYAFS) contribute to the NAD(+) site.

This sequence belongs to the NAD kinase family. It depends on a divalent metal cation as a cofactor.

The protein localises to the cytoplasm. It carries out the reaction NAD(+) + ATP = ADP + NADP(+) + H(+). Its function is as follows. Involved in the regulation of the intracellular balance of NAD and NADP, and is a key enzyme in the biosynthesis of NADP. Catalyzes specifically the phosphorylation on 2'-hydroxyl of the adenosine moiety of NAD to yield NADP. The polypeptide is NAD kinase (Mycobacterium leprae (strain Br4923)).